Consider the following 100-residue polypeptide: Small ribosomal subunit protein uS14c (100 aa).

This sequence belongs to the universal ribosomal protein uS14 family. Part of the 30S ribosomal subunit.

It is found in the plastid. It localises to the chloroplast. Its function is as follows. Binds 16S rRNA, required for the assembly of 30S particles. The chain is Small ribosomal subunit protein uS14c from Pelargonium hortorum (Common geranium).